We begin with the raw amino-acid sequence, 143 residues long: Nucleoside diphosphate kinase (143 aa).

The ATP site is built by K11, F59, R87, T93, R104, and N114. The active-site Pros-phosphohistidine intermediate is H117.

It belongs to the NDK family. As to quaternary structure, homotetramer. Mg(2+) is required as a cofactor.

The protein localises to the cytoplasm. The enzyme catalyses a 2'-deoxyribonucleoside 5'-diphosphate + ATP = a 2'-deoxyribonucleoside 5'-triphosphate + ADP. It catalyses the reaction a ribonucleoside 5'-diphosphate + ATP = a ribonucleoside 5'-triphosphate + ADP. Functionally, major role in the synthesis of nucleoside triphosphates other than ATP. The ATP gamma phosphate is transferred to the NDP beta phosphate via a ping-pong mechanism, using a phosphorylated active-site intermediate. The sequence is that of Nucleoside diphosphate kinase from Enterobacter sp. (strain 638).